The following is a 150-amino-acid chain: MSKAVKILLVNGPNLNLLGRREPGHYGHHTLAQIVEQLKLLAGEQGASLDHIQSNAEHELIDAIHQSDADFIIINPAAFTHTSVALRDALLGVAIPFIEVHLSNVHAREAFRHHSYFSDKAVGVICGLGEQGYRYALDSAIARVRAAQEK.

Tyr26 (proton acceptor) is an active-site residue. Positions 75, 81, and 88 each coordinate substrate. His101 serves as the catalytic Proton donor. Substrate-binding positions include 102–103 (LS) and Arg112.

Belongs to the type-II 3-dehydroquinase family. As to quaternary structure, homododecamer.

It carries out the reaction 3-dehydroquinate = 3-dehydroshikimate + H2O. Its pathway is metabolic intermediate biosynthesis; chorismate biosynthesis; chorismate from D-erythrose 4-phosphate and phosphoenolpyruvate: step 3/7. In terms of biological role, catalyzes a trans-dehydration via an enolate intermediate. This is 3-dehydroquinate dehydratase from Shewanella loihica (strain ATCC BAA-1088 / PV-4).